A 168-amino-acid polypeptide reads, in one-letter code: Large ribosomal subunit protein uL24 (168 aa).

A disordered region spans residues 112–168 (LEGKDPRKQPKEAPKAAEKPAKEEPKKETPKAEEKPAKEEPKETKVEKKSEEKEDEN).

The protein belongs to the universal ribosomal protein uL24 family. Part of the 50S ribosomal subunit.

In terms of biological role, one of two assembly initiator proteins, it binds directly to the 5'-end of the 23S rRNA, where it nucleates assembly of the 50S subunit. Functionally, located at the polypeptide exit tunnel on the outside of the subunit. This chain is Large ribosomal subunit protein uL24, found in Nitrosopumilus maritimus (strain SCM1).